We begin with the raw amino-acid sequence, 431 residues long: SH2 domain-containing protein 4B (431 aa).

The tract at residues Gln201–Tyr235 is disordered. Over residues Glu211–Tyr235 the composition is skewed to basic and acidic residues. The 93-residue stretch at Trp325 to Cys417 folds into the SH2 domain.

The chain is SH2 domain-containing protein 4B (Sh2d4b) from Mus musculus (Mouse).